The chain runs to 85 residues: U4-theraphotoxin-Hhn1a (85 aa).

An N-terminal signal peptide occupies residues 1-22; sequence MKVTLIAILTCAAVLVLHTTAA. Positions 23 to 48 are excised as a propeptide; it reads EELEAESQLMEVGMPDTELAAVDEER. Cystine bridges form between Cys52-Cys66, Cys56-Cys77, and Cys71-Cys82.

The protein belongs to the neurotoxin 12 (Hwtx-2) family. 02 (Hwtx-2) subfamily. As to quaternary structure, monomer. Expressed by the venom gland.

Its subcellular location is the secreted. Its function is as follows. Neurotoxin active on both insects and mammals. This Cyriopagopus hainanus (Chinese bird spider) protein is U4-theraphotoxin-Hhn1a.